The following is a 134-amino-acid chain: Small ribosomal subunit protein uS9 (134 aa).

The interval 109-134 is disordered; sequence DARRTEPHKPSKSSKGPRAKRQKSYR. Over residues 118 to 134 the composition is skewed to basic residues; the sequence is PSKSSKGPRAKRQKSYR.

This sequence belongs to the universal ribosomal protein uS9 family.

The polypeptide is Small ribosomal subunit protein uS9 (Methanococcus maripaludis (strain C7 / ATCC BAA-1331)).